Consider the following 264-residue polypeptide: Proteasome assembly chaperone 2 (264 aa).

Thr-137 bears the Phosphothreonine mark.

Belongs to the PSMG2 family. In terms of assembly, forms a heterodimer with PSMG1. The PSMG1-PSMG2 heterodimer interacts directly with the PSMA5 and PSMA7 proteasome alpha subunits. In terms of processing, degraded by the proteasome upon completion of 20S proteasome maturation. Widely expressed with highest levels in lung, brain and colon. Moderately expressed in muscle, stomach, spleen and heart. Weakly expressed in small intestine, pancreas and liver. Highly expressed in hepatocellular carcinomas with low levels in surrounding liver tissue.

The protein resides in the nucleus. In terms of biological role, chaperone protein which promotes assembly of the 20S proteasome as part of a heterodimer with PSMG1. The PSMG1-PSMG2 heterodimer binds to the PSMA5 and PSMA7 proteasome subunits, promotes assembly of the proteasome alpha subunits into the heteroheptameric alpha ring and prevents alpha ring dimerization. The chain is Proteasome assembly chaperone 2 from Homo sapiens (Human).